The sequence spans 495 residues: MKWLRLQDLPTDNSFAALPAEFYTRLQPRPPAAPRLLHANAEAAALIGLDPAEFSTQAFLDVFSGHAPLPGGDTLAAVYSGHQFGVWAGQLGDGRAHLLGEVRGPAGGWELQLKGAGMTPYSRMGDGRAVLRSSVREYLASEAMHGLGIPTTRSLALVVSDDPVMRETVETAAVVTRMAPSFVRFGSFEHWSARRQPEQLRVLADYVIDRFYPECRVAGAGRLDGEHGEILGLLAAVTRRTALLMADWQAVGFCHGVMNTDNMSILGLTLDYGPYGFMDTFQLGHICNHSDSEGRYAWNRQPSVGLWNLYRLASSLHTLAPDPEALRAVLDGYEAVFTQAFHGRMAGKLGLPQFLPEDETLLDDLLQLMHQQGADFTLAFRRLGEAVRGQRQPFEDLFIDRAAAGAWYDRLAARHASDGRAAQARAAAMDEVNPLYVLRNHLAEQAIRAAARGDAGEIDILLKLLRNPYKQQPGYDAYAGLAPDWAAGLEVSCSS.

Residues G92, G94, R95, K114, D126, G127, R177, and R184 each contribute to the ATP site. D261 functions as the Proton acceptor in the catalytic mechanism. Mg(2+) is bound by residues N262 and D271. An ATP-binding site is contributed by D271.

The protein belongs to the SELO family. Mg(2+) serves as cofactor. The cofactor is Mn(2+).

The catalysed reaction is L-seryl-[protein] + ATP = 3-O-(5'-adenylyl)-L-seryl-[protein] + diphosphate. It carries out the reaction L-threonyl-[protein] + ATP = 3-O-(5'-adenylyl)-L-threonyl-[protein] + diphosphate. The enzyme catalyses L-tyrosyl-[protein] + ATP = O-(5'-adenylyl)-L-tyrosyl-[protein] + diphosphate. It catalyses the reaction L-histidyl-[protein] + UTP = N(tele)-(5'-uridylyl)-L-histidyl-[protein] + diphosphate. The catalysed reaction is L-seryl-[protein] + UTP = O-(5'-uridylyl)-L-seryl-[protein] + diphosphate. It carries out the reaction L-tyrosyl-[protein] + UTP = O-(5'-uridylyl)-L-tyrosyl-[protein] + diphosphate. Its function is as follows. Nucleotidyltransferase involved in the post-translational modification of proteins. It can catalyze the addition of adenosine monophosphate (AMP) or uridine monophosphate (UMP) to a protein, resulting in modifications known as AMPylation and UMPylation. The polypeptide is Protein nucleotidyltransferase YdiU (Bordetella bronchiseptica (strain ATCC BAA-588 / NCTC 13252 / RB50) (Alcaligenes bronchisepticus)).